The sequence spans 458 residues: ATP synthase subunit beta (458 aa).

148–155 (GGAGVGKT) contacts ATP.

This sequence belongs to the ATPase alpha/beta chains family. In terms of assembly, F-type ATPases have 2 components, CF(1) - the catalytic core - and CF(0) - the membrane proton channel. CF(1) has five subunits: alpha(3), beta(3), gamma(1), delta(1), epsilon(1). CF(0) has three main subunits: a(1), b(2) and c(9-12). The alpha and beta chains form an alternating ring which encloses part of the gamma chain. CF(1) is attached to CF(0) by a central stalk formed by the gamma and epsilon chains, while a peripheral stalk is formed by the delta and b chains.

The protein localises to the cell inner membrane. The catalysed reaction is ATP + H2O + 4 H(+)(in) = ADP + phosphate + 5 H(+)(out). In terms of biological role, produces ATP from ADP in the presence of a proton gradient across the membrane. The catalytic sites are hosted primarily by the beta subunits. The sequence is that of ATP synthase subunit beta from Pseudomonas fluorescens (strain SBW25).